A 212-amino-acid chain; its full sequence is Thymidylate kinase (212 aa).

An ATP-binding site is contributed by 13–20; the sequence is GLEGAGKS.

The protein belongs to the thymidylate kinase family.

It catalyses the reaction dTMP + ATP = dTDP + ADP. Functionally, phosphorylation of dTMP to form dTDP in both de novo and salvage pathways of dTTP synthesis. In Legionella pneumophila (strain Paris), this protein is Thymidylate kinase.